The following is a 329-amino-acid chain: MKKILNGTDQVVEQMVEGLVKSHADVVHRVEGTRVIARNDKRPGKVGLVSGGGSGHEPAHAGYVGRGMLSAAVCGDVFTSPTPDQIYEGIKAADQGAGVLLIVKNYTGDVMNFEMAADLADADDIKVEQIVVDDDIAVEDSTFTTGRRGVAGTVLVHKIIGAAAEAGASLEELKALGEKVIASVKTLGVALSPCTVPEVGHPGFELGDDEIELGIGIHGEPGFTREKIMPSARLAKQLYERISSESKLLAGDKVVVLVNGMGATPLMEQYVFANDVHELLKNAGVQVEKTLVGDYMTSLEMAGLSLTILKLEDEKWVDMLKLPVDTIAW.

The 323-residue stretch at 7 to 329 folds into the DhaK domain; that stretch reads GTDQVVEQMV…LKLPVDTIAW (323 aa). Residues 53–56, Lys104, and Asp109 each bind dihydroxyacetone; that span reads GSGH. His56 serves as the catalytic Proton acceptor. His218 (tele-hemiaminal-histidine intermediate) is an active-site residue.

Homodimer. The dihydroxyacetone kinase complex is composed of a homodimer of DhaM, a homodimer of DhaK and the subunit DhaL.

Its subcellular location is the cytoplasm. It carries out the reaction dihydroxyacetone + phosphoenolpyruvate = dihydroxyacetone phosphate + pyruvate. The protein operates within polyol metabolism; glycerol degradation. Dihydroxyacetone binding subunit of the dihydroxyacetone kinase, which is responsible for the phosphoenolpyruvate (PEP)-dependent phosphorylation of dihydroxyacetone via a phosphoryl group transfer from DhaL-ATP. The sequence is that of PTS-dependent dihydroxyacetone kinase 1, dihydroxyacetone-binding subunit DhaK from Listeria innocua serovar 6a (strain ATCC BAA-680 / CLIP 11262).